Here is a 3563-residue protein sequence, read N- to C-terminus: D-lysergyl-peptide-synthetase subunit 1 (3563 aa).

Residues 307-706 (SCSPRPNPQA…LGRKDDQVKI (400 aa)) form an adenylation (A) domain 1 region. The Carrier 1 domain maps to 844–921 (EPKSDREKLL…EIVIVSTSAT (78 aa)). Residue Ser-881 is modified to O-(pantetheine 4'-phosphoryl)serine. The segment at 963–1354 (EDIYPCTHLQ…EHILTEIHSN (392 aa)) is condensation (C) domain 1. The interval 1397–1804 (QEKCQAQPDA…RRKDAQVKIR (408 aa)) is adenylation (A) domain 2. A Carrier 2 domain is found at 1944–2020 (PPSNATEHEI…KLALARGVTQ (77 aa)). At Ser-1981 the chain carries O-(pantetheine 4'-phosphoryl)serine. The condensation (C) domain 2 stretch occupies residues 2067–2486 (ERIYPCSPIQ…ALPVLDEDQM (420 aa)). Positions 2511 to 2909 (QCIRCPDSPS…GRNDDQVKVR (399 aa)) are adenylation (A) domain 3. The Carrier 3 domain occupies 3025–3104 (PPRTALEAEL…RFGSYRRAGA (80 aa)). Ser-3064 carries the O-(pantetheine 4'-phosphoryl)serine modification. The tract at residues 3166–3451 (LYFSKPMASE…VAKSTTWSSD (286 aa)) is cyclization (Cyc) domain.

Belongs to the NRP synthetase family.

Its pathway is alkaloid biosynthesis; ergot alkaloid biosynthesis. In terms of biological role, D-lysergyl-peptide-synthetase subunit 1; part of the gene cluster that mediates the biosynthesis of fungal ergot alkaloid. DmaW catalyzes the first step of ergot alkaloid biosynthesis by condensing dimethylallyl diphosphate (DMAP) and tryptophan to form 4-dimethylallyl-L-tryptophan. The second step is catalyzed by the methyltransferase easF that methylates 4-dimethylallyl-L-tryptophan in the presence of S-adenosyl-L-methionine, resulting in the formation of 4-dimethylallyl-L-abrine. The catalase easC and the FAD-dependent oxidoreductase easE then transform 4-dimethylallyl-L-abrine to chanoclavine-I which is further oxidized by easD in the presence of NAD(+), resulting in the formation of chanoclavine-I aldehyde. Agroclavine dehydrogenase easG then mediates the conversion of chanoclavine-I aldehyde to agroclavine via a non-enzymatic adduct reaction: the substrate is an iminium intermediate that is formed spontaneously from chanoclavine-I aldehyde in the presence of glutathione. The presence of easA is not required to complete this reaction. Further conversion of agroclavine to paspalic acid is a two-step process involving oxidation of agroclavine to elymoclavine and of elymoclavine to paspalic acid, the second step being performed by the elymoclavine oxidase cloA. Paspalic acid is then further converted to D-lysergic acid. Ergopeptines are assembled from D-lysergic acid and three different amino acids by the D-lysergyl-peptide-synthetases composed each of a monomudular and a trimodular nonribosomal peptide synthetase subunit. LpsB and lpsC encode the monomodular subunits responsible for D-lysergic acid activation and incorporation into the ergopeptine backbone. LpsA1 and A2 subunits encode the trimodular nonribosomal peptide synthetase assembling the tripeptide portion of ergopeptines. LpsA1 is responsible for formation of the major ergopeptine, ergotamine, and lpsA2 for alpha-ergocryptine, the minor ergopeptine of the total alkaloid mixture elaborated by C.purpurea. D-lysergyl-tripeptides are assembled by the nonribosomal peptide synthetases and released as N-(D-lysergyl-aminoacyl)-lactams. Cyclolization of the D-lysergyl-tripeptides is performed by the Fe(2+)/2-ketoglutarate-dependent dioxygenase easH which introduces a hydroxyl group into N-(D-lysergyl-aminoacyl)-lactam at alpha-C of the aminoacyl residue followed by spontaneous condensation with the terminal lactam carbonyl group. The polypeptide is D-lysergyl-peptide-synthetase subunit 1 (Claviceps purpurea (Ergot fungus)).